A 276-amino-acid polypeptide reads, in one-letter code: MLHRSFFRFAALADKKAFMELVKALRYRTEAPISDCSAALTEAAGDMDAAMQLLRKRGVARAMKKGDCVTEHGFVVSCVGSTPASGAAIITMCSETDFAARNEHFQRTCVQARDQLRKLMDATNGAVLANPEEAAKQLSDIMGEELRAAIAVLGENMRIRSIAPLVPAPHMSERLLVGSYTHGVLNVDGVGRIVGLVAVSQVRENEVISKDVLTSIGRHFVATSGAEGNYAHQNFFGSETETVGKWLKHHGLTFSSSLVQEFGKEPVVHTAAEPHQ.

It belongs to the EF-Ts family.

The protein localises to the mitochondrion. In terms of biological role, associates with the EF-Tu.GDP complex and induces the exchange of GDP to GTP. It remains bound to the aminoacyl-tRNA.EF-Tu.GTP complex up to the GTP hydrolysis stage on the ribosome. The polypeptide is Elongation factor Ts, mitochondrial (Leishmania braziliensis).